We begin with the raw amino-acid sequence, 175 residues long: Protein OPG036 (175 aa).

The protein belongs to the poxviridae OPG036 family.

Its subcellular location is the host nucleus. Functionally, plays a role in the inhibition of host innate immune response. Within the host nucleus, inhibits activation of interferon-beta promoter by inhibiting IRF3 activation. This is Protein OPG036 (OPG036) from Bos taurus (Bovine).